Consider the following 244-residue polypeptide: Thiol S-methyltransferase TMT1B (244 aa).

Residues 1-23 form the signal peptide; that stretch reads MDILVPLLQLLVLLLTLPLHLMA.

Belongs to the methyltransferase superfamily. As to expression, expressed in the liver.

The protein localises to the endoplasmic reticulum membrane. It is found in the lipid droplet. It localises to the microsome. The protein resides in the cytoplasm. Its subcellular location is the cytosol. It carries out the reaction a thiol + S-adenosyl-L-methionine = a methyl thioether + S-adenosyl-L-homocysteine + H(+). Functionally, thiol S-methyltransferase that catalyzes the transfer of a methyl group from S-adenosyl-L-methionine to alkyl and phenolic thiol-containing acceptor substrates. Together with TMT1B accounts for most of S-thiol methylation activity in the endoplasmic reticulum of hepatocytes. Selectively methylates S-centered nucleophiles from metabolites such as hydrogen sulfide and dithiothreitol. In Homo sapiens (Human), this protein is Thiol S-methyltransferase TMT1B.